Here is a 556-residue protein sequence, read N- to C-terminus: Formate--tetrahydrofolate ligase (556 aa).

Position 65-72 (65-72) interacts with ATP; that stretch reads TPAGEGKS.

This sequence belongs to the formate--tetrahydrofolate ligase family.

It carries out the reaction (6S)-5,6,7,8-tetrahydrofolate + formate + ATP = (6R)-10-formyltetrahydrofolate + ADP + phosphate. The protein operates within one-carbon metabolism; tetrahydrofolate interconversion. This chain is Formate--tetrahydrofolate ligase, found in Streptococcus pneumoniae serotype 19F (strain G54).